The sequence spans 858 residues: Leucine--tRNA ligase (858 aa).

Positions 42–52 match the 'HIGH' region motif; sequence PYPSGRLHMGH. A 'KMSKS' region motif is present at residues 618-622; the sequence is KMSKS. Lysine 621 serves as a coordination point for ATP.

The protein belongs to the class-I aminoacyl-tRNA synthetase family.

It is found in the cytoplasm. The catalysed reaction is tRNA(Leu) + L-leucine + ATP = L-leucyl-tRNA(Leu) + AMP + diphosphate. This chain is Leucine--tRNA ligase, found in Vibrio cholerae serotype O1 (strain ATCC 39315 / El Tor Inaba N16961).